We begin with the raw amino-acid sequence, 399 residues long: Ectoine hydrolase (399 aa).

Belongs to the peptidase M24 family.

The protein localises to the cytoplasm. The catalysed reaction is L-ectoine + H2O = (2S)-2-acetamido-4-aminobutanoate. Its function is as follows. Involved in the degradation of ectoine, which allows H.elongata to utilize ectoine as both a carbon and a nitrogen source for growth. Catalyzes the hydrolysis of ectoine to N-acetyl-L-2,4-diaminobutyric acid (N-Ac-DABA). It can produce both isoforms N-gamma-acetyl-L-2,4-diaminobutyric acid (N-gamma-Ac-DABA) and N-alpha-acetyl-L-2,4-diaminobutyric acid (-Nalpha-Ac-DABA), however N-alpha-Ac-DABA is the essential substrate for the subsequent catabolic enzyme DoeB. This is Ectoine hydrolase from Halomonas elongata (strain ATCC 33173 / DSM 2581 / NBRC 15536 / NCIMB 2198 / 1H9).